Consider the following 516-residue polypeptide: Maintenance of mitochondrial morphology protein 1 (516 aa).

Over 1–43 (MAGSTSASLQTPYFPSSTQINPVRVDHTLPLPPAQPSLSFTQG) the chain is Lumenal. A helical membrane pass occupies residues 44–64 (LLVGQLSVVLLIGAFIKFFIF). Over 65 to 516 (GEAPPPPSRG…GSMPDTVTET (452 aa)) the chain is Cytoplasmic. Disordered regions lie at residues 70–118 (PPSR…SSST), 295–349 (TSDQ…SKHG), 420–466 (RTGL…IDRG), and 485–516 (GGHQ…VTET). 3 stretches are compositionally biased toward polar residues: residues 74 to 96 (GLSN…TDSS), 105 to 118 (STSN…SSST), and 295 to 312 (TSDQ…TTSE). The SMP-LTD domain maps to 151 to 412 (QPESLDWFNV…EPRVQVVGLP (262 aa)). A compositionally biased stretch (gly residues) spans 449–460 (GVSGGGGGGGSM).

Belongs to the MMM1 family. Homodimer. Component of the ER-mitochondria encounter structure (ERMES) or MDM complex, composed of MMM1, MDM10, MDM12 and MDM34. An MMM1 homodimer associates with one molecule of MDM12 on each side in a pairwise head-to-tail manner, and the SMP-LTD domains of MMM1 and MDM12 generate a continuous hydrophobic tunnel for phospholipid trafficking.

The protein resides in the endoplasmic reticulum membrane. Component of the ERMES/MDM complex, which serves as a molecular tether to connect the endoplasmic reticulum (ER) and mitochondria. Components of this complex are involved in the control of mitochondrial shape and protein biogenesis, and function in nonvesicular lipid trafficking between the ER and mitochondria. The MDM12-MMM1 subcomplex functions in the major beta-barrel assembly pathway that is responsible for biogenesis of all outer membrane beta-barrel proteins, and acts in a late step after the SAM complex. The MDM10-MDM12-MMM1 subcomplex further acts in the TOM40-specific pathway after the action of the MDM12-MMM1 complex. Essential for establishing and maintaining the structure of mitochondria and maintenance of mtDNA nucleoids. This is Maintenance of mitochondrial morphology protein 1 from Paracoccidioides brasiliensis (strain Pb18).